The following is a 701-amino-acid chain: DNA ligase 2 (701 aa).

The segment covering 1–10 (MSPAPQNRQP) has biased composition (polar residues). The segment at 1 to 21 (MSPAPQNRQPSGVPVGGQFAA) is disordered. NAD(+) contacts are provided by residues 64–68 (DAEFD), 111–112 (SL), and Glu133. Catalysis depends on Lys135, which acts as the N6-AMP-lysine intermediate. 4 residues coordinate NAD(+): Arg156, Glu189, Lys302, and Lys326. Positions 420, 423, 436, and 441 each coordinate Zn(2+). The span at 603-613 (KAAPAAGAKAP) shows a compositional bias: low complexity. The interval 603-623 (KAAPAAGAKAPKLTKPDGKPM) is disordered. The BRCT domain occupies 615 to 701 (LTKPDGKPMN…FAQMVEDGEV (87 aa)).

Belongs to the NAD-dependent DNA ligase family. LigA subfamily. It depends on Mg(2+) as a cofactor. Requires Mn(2+) as cofactor.

The catalysed reaction is NAD(+) + (deoxyribonucleotide)n-3'-hydroxyl + 5'-phospho-(deoxyribonucleotide)m = (deoxyribonucleotide)n+m + AMP + beta-nicotinamide D-nucleotide.. DNA ligase that catalyzes the formation of phosphodiester linkages between 5'-phosphoryl and 3'-hydroxyl groups in double-stranded DNA using NAD as a coenzyme and as the energy source for the reaction. It is essential for DNA replication and repair of damaged DNA. The protein is DNA ligase 2 of Pseudarthrobacter chlorophenolicus (strain ATCC 700700 / DSM 12829 / CIP 107037 / JCM 12360 / KCTC 9906 / NCIMB 13794 / A6) (Arthrobacter chlorophenolicus).